A 512-amino-acid chain; its full sequence is ETS translocation variant 3 (512 aa).

Positions 35–116 (IQLWHFILEL…KGKRFTYKFN (82 aa)) form a DNA-binding region, ETS. The interval 136–222 (VPQSAPPVPT…NAIGGGGIGH (87 aa)) is disordered. Phosphoserine is present on residues serine 139, serine 159, and serine 315. Residues 158–184 (HSPTNDVQPGRFSASSLTASGQESSNG) are compositionally biased toward polar residues. A disordered region spans residues 336–512 (PEESTQFSIK…QGLATAAADA (177 aa)). The segment covering 380 to 406 (IKVEPASEKDPESLRQSAREKEEHTQE) has biased composition (basic and acidic residues). A Glycyl lysine isopeptide (Lys-Gly) (interchain with G-Cter in SUMO2) cross-link involves residue lysine 381. Lysine 388 bears the N6-acetyllysine; alternate mark. Lysine 388 participates in a covalent cross-link: Glycyl lysine isopeptide (Lys-Gly) (interchain with G-Cter in SUMO2); alternate. The span at 443-452 (EPLEVTEDIE) shows a compositional bias: acidic residues. Composition is skewed to basic and acidic residues over residues 453 to 468 (DRPG…KEDA) and 479 to 491 (RWND…ELSK).

This sequence belongs to the ETS family.

The protein localises to the nucleus. Transcriptional repressor that contribute to growth arrest during terminal macrophage differentiation by repressing target genes involved in Ras-dependent proliferation. Represses MMP1 promoter activity. This is ETS translocation variant 3 (ETV3) from Pan troglodytes (Chimpanzee).